The following is a 514-amino-acid chain: Peptide chain release factor 3 (514 aa).

A tr-type G domain is found at 8-268; that stretch reads KKRRTFAIIS…IFLKFAPEPH (261 aa). Residues 17 to 24, 85 to 89, and 139 to 142 contribute to the GTP site; these read SHPDAGKT, DTPGH, and NKLD.

The protein belongs to the TRAFAC class translation factor GTPase superfamily. Classic translation factor GTPase family. PrfC subfamily.

Its subcellular location is the cytoplasm. In terms of biological role, increases the formation of ribosomal termination complexes and stimulates activities of RF-1 and RF-2. It binds guanine nucleotides and has strong preference for UGA stop codons. It may interact directly with the ribosome. The stimulation of RF-1 and RF-2 is significantly reduced by GTP and GDP, but not by GMP. The chain is Peptide chain release factor 3 from Streptococcus pneumoniae (strain P1031).